A 326-amino-acid polypeptide reads, in one-letter code: Macrosialin (326 aa).

The first 20 residues, 1–20, serve as a signal peptide directing secretion; sequence MRLPVCLILLGPLIAQGTEE. The mucin-like stretch occupies residues 21-109; that stretch reads DCPHKKAVTL…ATSPRSSTVG (89 aa). Residues 21–291 are Extracellular-facing; the sequence is DCPHKKAVTL…PCFSCNRDQS (271 aa). The span at 38 to 58 shows a compositional bias: low complexity; that stretch reads PTATESTASPTTSHRPTTTSH. Residues 38–129 are disordered; that stretch reads PTATESTASP…SPRSKGALGN (92 aa). 4 tandem repeats follow at residues 44 to 49, 50 to 64, 65 to 72, and 73 to 88. The segment covering 59–69 has biased composition (polar residues); that stretch reads GNVTVHTSSGP. N-linked (GlcNAc...) asparagine glycosylation occurs at asparagine 60. The segment covering 70-80 has biased composition (low complexity); it reads TTVTHNPATTT. Residues 81–108 show a composition bias toward polar residues; it reads SHGNATISHATVSPTTNGTATSPRSSTV. Asparagine 84 and asparagine 97 each carry an N-linked (GlcNAc...) asparagine glycan. Positions 111 to 120 are enriched in pro residues; sequence HPGPPPPSPS. Asparagine 129, asparagine 134, asparagine 169, asparagine 218, asparagine 233, and asparagine 251 each carry an N-linked (GlcNAc...) asparagine glycan. A disulfide bridge connects residues cysteine 139 and cysteine 177. A disulfide bridge links cysteine 249 with cysteine 286. The helical transmembrane segment at 292-316 threads the bilayer; it reads LLLPLIIGLVLLGLLTLVLIAFCIT. The Cytoplasmic portion of the chain corresponds to 317–326; sequence RRRQSTYQPL.

This sequence belongs to the LAMP family. In terms of processing, N- and O-glycosylated. In terms of tissue distribution, expressed in tissue macrophages and to a lesser extent in dendritic cells.

It is found in the endosome membrane. The protein resides in the lysosome membrane. Its subcellular location is the cell membrane. Could play a role in phagocytic activities of tissue macrophages, both in intracellular lysosomal metabolism and extracellular cell-cell and cell-pathogen interactions. Binds to tissue- and organ-specific lectins or selectins, allowing homing of macrophage subsets to particular sites. Rapid recirculation of CD68 from endosomes and lysosomes to the plasma membrane may allow macrophages to crawl over selectin-bearing substrates or other cells. The sequence is that of Macrosialin (Cd68) from Mus musculus (Mouse).